A 343-amino-acid polypeptide reads, in one-letter code: Ion-translocating oxidoreductase complex subunit D (343 aa).

The next 4 helical transmembrane spans lie at 24-44 (VLLA…AGTL), 45-65 (YNLA…LAAR), 69-91 (LAFF…ALPP), and 124-144 (AMLG…SWPA). Threonine 171 carries the FMN phosphoryl threonine modification. 5 consecutive transmembrane segments (helical) span residues 197–217 (FGGA…LYLL), 221–241 (LITW…SLLF), 251–271 (GSPL…FIVT), 284–304 (LVFG…GGYP), and 305–325 (DAVA…DYYT).

This sequence belongs to the NqrB/RnfD family. The complex is composed of six subunits: RnfA, RnfB, RnfC, RnfD, RnfE and RnfG. FMN is required as a cofactor.

The protein localises to the cell inner membrane. Part of a membrane-bound complex that couples electron transfer with translocation of ions across the membrane. This chain is Ion-translocating oxidoreductase complex subunit D, found in Ectopseudomonas mendocina (strain ymp) (Pseudomonas mendocina).